The primary structure comprises 563 residues: Benzaldehyde lyase (563 aa).

The protein belongs to the TPP enzyme family. A metal cation serves as cofactor. Requires thiamine diphosphate as cofactor.

It carries out the reaction benzoin = 2 benzaldehyde. Cleavage of benzoin-anisoin acyloin linkage. This chain is Benzaldehyde lyase (bznB), found in Pseudomonas fluorescens.